Consider the following 469-residue polypeptide: Deoxyribodipyrimidine photo-lyase (469 aa).

In terms of domain architecture, Photolyase/cryptochrome alpha/beta spans 1-133 (MRLVWFRRDL…IWSAFDDKCV (133 aa)). A (6R)-5,10-methylene-5,6,7,8-tetrahydrofolate-binding site is contributed by E107.

It belongs to the DNA photolyase class-1 family. As to quaternary structure, monomer. Requires FAD as cofactor. The cofactor is (6R)-5,10-methylene-5,6,7,8-tetrahydrofolate.

The catalysed reaction is cyclobutadipyrimidine (in DNA) = 2 pyrimidine residues (in DNA).. Functionally, involved in repair of UV radiation-induced DNA damage. Catalyzes the light-dependent monomerization (300-600 nm) of cyclobutyl pyrimidine dimers (in cis-syn configuration), which are formed between adjacent bases on the same DNA strand upon exposure to ultraviolet radiation. The polypeptide is Deoxyribodipyrimidine photo-lyase (phrA) (Vibrio cholerae serotype O1 (strain ATCC 39315 / El Tor Inaba N16961)).